A 172-amino-acid chain; its full sequence is Large ribosomal subunit protein uL10 (172 aa).

Belongs to the universal ribosomal protein uL10 family. In terms of assembly, part of the ribosomal stalk of the 50S ribosomal subunit. The N-terminus interacts with L11 and the large rRNA to form the base of the stalk. The C-terminus forms an elongated spine to which L12 dimers bind in a sequential fashion forming a multimeric L10(L12)X complex.

Its function is as follows. Forms part of the ribosomal stalk, playing a central role in the interaction of the ribosome with GTP-bound translation factors. This is Large ribosomal subunit protein uL10 from Brucella abortus (strain S19).